Consider the following 829-residue polypeptide: MKMTRRAFVKANAAASAAAVAGVTLPASATNLIVSSDQTKIKWDKAPCRFCGTGCSVLVGTQNGRVVATQGDPEAPVNKGLNCIKGYFLSKIMYGKDRVQTPMLRMKDGQYNKDGDFAPVSWDVALDTMAEKWKAALKKHGPTGVGMFGSGQWTVMEGYAAVKLMKAGFRSNNIDPNARHCMASAVGAFMRTFGIDEPMGCYDDFENADSFVLWGSNMAEMHPVLWTRISDRRLSHPHVKVNVLSTYYHRSFELADKGYIFEPQSDLAIANFIANYIIQNNAVNWDFVNKHTNFKQATTDIGYGLRDDDPLQMEAANPNSGAMSSISFEEYKKSVAPYTAQKASEMSGVSEEDLITLAKQYADPKTKVMSLWTMGMNQHTRGVWMNSLVYNIHLLTGKIATPGNSPFSLTGQPSACGTAREVGTFSHRLPADMVVANPKHRAISEKIWKLPEGTLNGKPGAHAVVQDRMLKDGKINAYWVMCNNNMQAGPNINTERLPGYRNPENFIVCSDPYPTATAQAADLILPTAMWVEKEGAYGNAERRTQAWYQQVQAKGEAKSDLWQIMEFSKRFKVEEVWGEELVAKAPEYRGKTMYDILFKNGQVDAFPLSEAQELNDDAKAQGFYVQKGLFEEYASFGRGHGHDLAPYDTYHTVRGLRWPVVDGKETLWRFKEGSDPYAKKGSDWDFYGKPDGKALIISAPYEAPPEVPNDEFDMWLCTGRVLEHWHTGTMTRRVPELYKAVPDALCYIHPADAKKRNLRRGDEVLISNKRGEVRVRVETRGRNRPPEGLVFVPFFDARILINKLILDATDPLSKQTDFKKCPVKITKIA.

Positions 1-29 form a signal peptide, tat-type signal; the sequence is MKMTRRAFVKANAAASAAAVAGVTLPASA. The 4Fe-4S Mo/W bis-MGD-type domain occupies 41 to 97; sequence IKWDKAPCRFCGTGCSVLVGTQNGRVVATQGDPEAPVNKGLNCIKGYFLSKIMYGKD. Residues cysteine 48, cysteine 51, cysteine 55, and cysteine 83 each coordinate [4Fe-4S] cluster. Mo-bis(molybdopterin guanine dinucleotide)-binding positions include lysine 85, glutamine 152, asparagine 177, cysteine 181, 214–221, 245–249, 264–266, methionine 374, glutamine 378, asparagine 484, 510–511, lysine 533, aspartate 560, and 718–727; these read WGSNMAEM, STYYH, QSD, SD, and TGRVLEHWHT. A substrate-binding site is contributed by phenylalanine 794. Asparagine 802 and lysine 819 together coordinate Mo-bis(molybdopterin guanine dinucleotide).

Belongs to the prokaryotic molybdopterin-containing oxidoreductase family. NasA/NapA/NarB subfamily. As to quaternary structure, component of the periplasmic nitrate reductase NapAB complex composed of NapA and NapB. [4Fe-4S] cluster serves as cofactor. The cofactor is Mo-bis(molybdopterin guanine dinucleotide). Predicted to be exported by the Tat system. The position of the signal peptide cleavage has not been experimentally proven.

Its subcellular location is the periplasm. The enzyme catalyses 2 Fe(II)-[cytochrome] + nitrate + 2 H(+) = 2 Fe(III)-[cytochrome] + nitrite + H2O. Functionally, catalytic subunit of the periplasmic nitrate reductase complex NapAB. Receives electrons from NapB and catalyzes the reduction of nitrate to nitrite. The polypeptide is Periplasmic nitrate reductase (Aliivibrio fischeri (strain ATCC 700601 / ES114) (Vibrio fischeri)).